A 464-amino-acid polypeptide reads, in one-letter code: Soluble pyridine nucleotide transhydrogenase (464 aa).

35–44 (EDKSQVGGNC) is a binding site for FAD.

This sequence belongs to the class-I pyridine nucleotide-disulfide oxidoreductase family. FAD is required as a cofactor.

The protein localises to the cytoplasm. It carries out the reaction NAD(+) + NADPH = NADH + NADP(+). Its function is as follows. Conversion of NADPH, generated by peripheral catabolic pathways, to NADH, which can enter the respiratory chain for energy generation. The polypeptide is Soluble pyridine nucleotide transhydrogenase (Hahella chejuensis (strain KCTC 2396)).